Consider the following 315-residue polypeptide: Tyrosine--tRNA ligase (315 aa).

Tyrosine 32 serves as a coordination point for L-tyrosine. Positions 37-45 (PSGEIHLGH) match the 'HIGH' region motif. L-tyrosine-binding residues include tyrosine 152, glutamine 156, aspartate 159, and glutamine 174. The short motif at 208 to 212 (KMSSS) is the 'KMSKS' region element. Residue serine 211 coordinates ATP.

Belongs to the class-I aminoacyl-tRNA synthetase family. TyrS type 3 subfamily. In terms of assembly, homodimer.

Its subcellular location is the cytoplasm. The catalysed reaction is tRNA(Tyr) + L-tyrosine + ATP = L-tyrosyl-tRNA(Tyr) + AMP + diphosphate + H(+). Catalyzes the attachment of tyrosine to tRNA(Tyr) in a two-step reaction: tyrosine is first activated by ATP to form Tyr-AMP and then transferred to the acceptor end of tRNA(Tyr). This Methanoculleus marisnigri (strain ATCC 35101 / DSM 1498 / JR1) protein is Tyrosine--tRNA ligase.